The sequence spans 74 residues: Cytochrome c oxidase assembly factor 5 (74 aa).

The CHCH domain maps to glutamate 27 to arginine 65. The Cx10C motif motif lies at cysteine 30–cysteine 41. Disulfide bonds link cysteine 30/cysteine 57 and cysteine 41/cysteine 47. Serine 37 carries the phosphoserine modification. The Cx9C motif signature appears at cysteine 47–cysteine 57.

This sequence belongs to the PET191 family.

Functionally, involved in an early step of the mitochondrial complex IV assembly process. This is Cytochrome c oxidase assembly factor 5 (Coa5) from Pongo abelii (Sumatran orangutan).